Here is a 154-residue protein sequence, read N- to C-terminus: Large ribosomal subunit protein uL13 (154 aa).

It belongs to the universal ribosomal protein uL13 family. In terms of assembly, part of the 50S ribosomal subunit.

In terms of biological role, this protein is one of the early assembly proteins of the 50S ribosomal subunit, although it is not seen to bind rRNA by itself. It is important during the early stages of 50S assembly. This Rhizobium etli (strain CIAT 652) protein is Large ribosomal subunit protein uL13.